Reading from the N-terminus, the 394-residue chain is MTQLFDTLGFIEASAVRAGAGADAVAHEEAVTPVGGAAVSLEQVGKVFATPRGQAAALRDVTLDVRRGEVFGIIGRSGAGKSTLLRLLNGLERPSSGRVRVQGVDVGALDEDGLVALRRRTGMVFQHFNLLSAKTVFENVALPLKIAGVPKAERVRKVEALLELVGLAAKRDAYPASLSGGQKQRVGIARALVHDPEVLLCDEATSALDPETTQSILALLADINRRLGLTIVLITHEMEVIRAVCDTVAVIEQGEVVETGPVWRVFGDPRHGATRALLSTLQHDLPAELAARVRPLPEQAALPDGAQIVLDVRYTGESGGEPDVGALAAALGGSVRFLHGGIESIQGHAQGRLVIAATPRADDAGPSTARGGAVAALLERARRHANHAEVLGYV.

The region spanning 39 to 278 (VSLEQVGKVF…PRHGATRALL (240 aa)) is the ABC transporter domain. 75–82 (GRSGAGKS) provides a ligand contact to ATP.

This sequence belongs to the ABC transporter superfamily. Methionine importer (TC 3.A.1.24) family. The complex is composed of two ATP-binding proteins (MetN), two transmembrane proteins (MetI) and a solute-binding protein (MetQ).

It localises to the cell inner membrane. It catalyses the reaction L-methionine(out) + ATP + H2O = L-methionine(in) + ADP + phosphate + H(+). It carries out the reaction D-methionine(out) + ATP + H2O = D-methionine(in) + ADP + phosphate + H(+). Functionally, part of the ABC transporter complex MetNIQ involved in methionine import. Responsible for energy coupling to the transport system. The sequence is that of Methionine import ATP-binding protein MetN 2 from Burkholderia cenocepacia (strain HI2424).